Here is a 291-residue protein sequence, read N- to C-terminus: F-box protein PP2-A12 (291 aa).

The 47-residue stretch at 25–71 (KPGLGDLPEACVAIIVENLDPVEICRFSKLNRAFRGASWADCVWESK) folds into the F-box domain.

The chain is F-box protein PP2-A12 (P2A12) from Arabidopsis thaliana (Mouse-ear cress).